We begin with the raw amino-acid sequence, 671 residues long: DNA ligase (671 aa).

NAD(+) contacts are provided by residues 32–36, 81–82, and glutamate 113; these read DAEYD and SL. Residue lysine 115 is the N6-AMP-lysine intermediate of the active site. Positions 136, 173, 290, and 314 each coordinate NAD(+). 4 residues coordinate Zn(2+): cysteine 408, cysteine 411, cysteine 426, and cysteine 432. Positions 593–671 constitute a BRCT domain; it reads EIDSPFAGKT…EAEMLRLFGE (79 aa).

It belongs to the NAD-dependent DNA ligase family. LigA subfamily. Mg(2+) serves as cofactor. Requires Mn(2+) as cofactor.

The enzyme catalyses NAD(+) + (deoxyribonucleotide)n-3'-hydroxyl + 5'-phospho-(deoxyribonucleotide)m = (deoxyribonucleotide)n+m + AMP + beta-nicotinamide D-nucleotide.. Functionally, DNA ligase that catalyzes the formation of phosphodiester linkages between 5'-phosphoryl and 3'-hydroxyl groups in double-stranded DNA using NAD as a coenzyme and as the energy source for the reaction. It is essential for DNA replication and repair of damaged DNA. This chain is DNA ligase, found in Enterobacter sp. (strain 638).